A 432-amino-acid chain; its full sequence is Leucine-rich repeat-containing protein ODA7 (432 aa).

5 LRR repeats span residues 47–68 (NLKA…PPLA), 69–90 (DLKC…EAVP), 91–112 (GLDT…ACCP), 113–134 (ALRT…AHLA), and 138–159 (ALQT…DILK). Residues 173–211 (PVVSNIKNYRKVLVTSIPSLTYLDDRPVFDNERKIAQAW) enclose the LRRCT domain. Positions 212–243 (LEGGLEGERAMRNQLKEEEEERSRKNHEFMMQ) form a coiled coil. Disordered stretches follow at residues 297 to 332 (RPGE…AAAE) and 368 to 432 (EELD…NDLD). Composition is skewed to low complexity over residues 323-332 (GAWGSGAAAE) and 407-425 (VAAA…ISAA).

The protein belongs to the DNAAF1 family. In terms of assembly, interacts with both outer row and I1 inner row dyneins.

Its subcellular location is the cytoplasm. It is found in the cytoskeleton. The protein localises to the cilium axoneme. Its function is as follows. Cilium-specific protein required for cilia structures. Axonemal dynein-associated protein that participates in a structural link between inner and outer row dyneins. In Chlamydomonas reinhardtii (Chlamydomonas smithii), this protein is Leucine-rich repeat-containing protein ODA7 (ODA7).